A 345-amino-acid polypeptide reads, in one-letter code: Protein RecA (345 aa).

66 to 73 (GPESSGKT) contacts ATP.

This sequence belongs to the RecA family.

It localises to the cytoplasm. In terms of biological role, can catalyze the hydrolysis of ATP in the presence of single-stranded DNA, the ATP-dependent uptake of single-stranded DNA by duplex DNA, and the ATP-dependent hybridization of homologous single-stranded DNAs. It interacts with LexA causing its activation and leading to its autocatalytic cleavage. The protein is Protein RecA of Acidithiobacillus ferrooxidans (strain ATCC 23270 / DSM 14882 / CIP 104768 / NCIMB 8455) (Ferrobacillus ferrooxidans (strain ATCC 23270)).